The primary structure comprises 762 residues: MLLSLTFPVLRGCTGHLVNRSLQAPRWRVTWKRSYSLLQDEVKSLRTVVNPDISKIRNIGIMAHIDAGKTTTTERMLYYSGYTRALGDVDDGDTVTDYMAQERERGITIQSAAVTFDWKDYRINLIDTPGHVDFTLEVERALRVLDGAVAVFDASAGVEAQTMTVWRQAEKHQIPCVCFLNKMDKPAASLRYSLDSIKAKLKANPVLLQIPIGSGKSFTGLVDLITRQKMMWQGNALTNDGRSFEINSLQPSDDPNVLLAVSEARAALIEQVADLDDDFAELLLGEYGENFDAVPAVKLQEAVRRVTLARKGVPVLCGSSLKNKGVQPLLDAITAYLPAPNERNHDLVRWYKNDLCALAFKVVHDKQRGPLVFVRIYSGSMKAQSSVHNINRNETEKMSRLLLPFADQQIEIPSLSAGNIALTVGLKQTVTGDTIVSSKASAAAAIRRAQAEAESRSNSHSAALAGVEVPEPVFFCSIEPPTMAKQADLEHALNCLQREDPSLKVRIDPDSGQTVLCGMGELHIEIIHDRIKREYKIETHLGPLQVAYRETILQSATAKDLLDRILGEKRHVVSVELTVHPLKENSSASCDITFEEDVKAMLPADVREAVENGVQSAYLQGPVLGFPVQGVQTVIQNVRLESGTSAAMVSACVSRCMLKALKQAGGQVLEPVMALEVTVGEEHLSSVLADLSQRRGTICDIQSRQDNKILLADVPLAEMMGYSTVLRTLTSGNATFSLELSSYEPMNSQDQNILLNKMAGLT.

The N-terminal 35 residues, 1–35 (MLLSLTFPVLRGCTGHLVNRSLQAPRWRVTWKRSY), are a transit peptide targeting the mitochondrion. Residues 54 to 341 (SKIRNIGIMA…AITAYLPAPN (288 aa)) form the tr-type G domain. GTP-binding positions include 63–70 (AHIDAGKT), 127–131 (DTPGH), and 181–184 (NKMD).

Belongs to the TRAFAC class translation factor GTPase superfamily. Classic translation factor GTPase family. EF-G/EF-2 subfamily.

The protein resides in the mitochondrion. It carries out the reaction GTP + H2O = GDP + phosphate + H(+). Functionally, mitochondrial GTPase that mediates the disassembly of ribosomes from messenger RNA at the termination of mitochondrial protein biosynthesis. Acts in collaboration with mrrf. GTP hydrolysis follows the ribosome disassembly and probably occurs on the ribosome large subunit. Not involved in the GTP-dependent ribosomal translocation step during translation elongation. In Danio rerio (Zebrafish), this protein is Ribosome-releasing factor 2, mitochondrial (gfm2).